The primary structure comprises 348 residues: Protein lifeguard 1 (348 aa).

The tract at residues 1–118 (MSHEKSFLVS…GNYQEEGPPS (118 aa)) is disordered. Residues 14–41 (YPPPNPGYPVGPQAPMPPYVQPPYPGAP) show a composition bias toward pro residues. Positions 42–57 (YPQAAFQPSPYGQPGY) are enriched in low complexity. A compositionally biased stretch (pro residues) spans 82–101 (GPYPQSPFPPNPYGQPPPFQ). 7 consecutive transmembrane segments (helical) span residues 142–162 (VFLV…IFTF), 174–194 (VWTY…LSCC), 205–225 (LVAL…IASF), 230–250 (AVIM…IFSM), 260–280 (MGVL…CIFI), 284–304 (ILEI…LAVD), and 323–343 (FAAL…LTII).

This sequence belongs to the BI1 family. LFG subfamily.

Its subcellular location is the membrane. Functionally, potential apoptotic regulator. The sequence is that of Protein lifeguard 1 (Grina) from Rattus norvegicus (Rat).